Reading from the N-terminus, the 173-residue chain is Pyrimidine operon regulatory protein (173 aa).

Substrate is bound by residues 40-41 (TR), 97-105 (DDVLYTGRT), and arginine 130. Positions 93–105 (VILVDDVLYTGRT) match the PRPP-binding motif.

This sequence belongs to the purine/pyrimidine phosphoribosyltransferase family. PyrR subfamily.

Functionally, regulates transcriptional attenuation of the pyrimidine nucleotide (pyr) operon in response to exogenous pyrimidines, probably by binding to specific sites on pyr mRNA. This probably disrupts an antiterminator hairpin in the RNA and favors formation of a downstream transcription terminator, leading to a reduced expression of downstream genes. The protein is Pyrimidine operon regulatory protein of Lactococcus lactis subsp. lactis (strain IL1403) (Streptococcus lactis).